We begin with the raw amino-acid sequence, 414 residues long: Probable 26S proteasome regulatory subunit 6B (414 aa).

Position 202 to 209 (202 to 209 (GPPGCGKT)) interacts with ATP.

The protein belongs to the AAA ATPase family.

It is found in the cytoplasm. The protein resides in the nucleus. The 26S proteasome is involved in the ATP-dependent degradation of ubiquitinated proteins. The regulatory (or ATPase) complex confers ATP dependency and substrate specificity to the 26S complex. The protein is Probable 26S proteasome regulatory subunit 6B (rpt-3) of Caenorhabditis elegans.